The chain runs to 101 residues: Urease subunit beta (101 aa).

It belongs to the urease beta subunit family. As to quaternary structure, heterotrimer of UreA (gamma), UreB (beta) and UreC (alpha) subunits. Three heterotrimers associate to form the active enzyme.

Its subcellular location is the cytoplasm. The catalysed reaction is urea + 2 H2O + H(+) = hydrogencarbonate + 2 NH4(+). It functions in the pathway nitrogen metabolism; urea degradation; CO(2) and NH(3) from urea (urease route): step 1/1. The sequence is that of Urease subunit beta from Cereibacter sphaeroides (strain ATCC 17029 / ATH 2.4.9) (Rhodobacter sphaeroides).